The sequence spans 559 residues: Excitatory amino acid transporter 5 (559 aa).

Residues 1–16 (MVLDAVLARGRTVCKH) lie on the Cytoplasmic side of the membrane. 3 consecutive transmembrane segments (helical) span residues 17–37 (NGLL…GFFL), 60–80 (MLKM…LASL), and 94–114 (AYYL…VSII). The Extracellular segment spans residues 115–215 (HPGGAAQKET…EIVYKSEPGT (101 aa)). An N-linked (GlcNAc...) asparagine glycan is attached at Asn-190. Residues 216-236 (SDGMNVLGIVIFSATMGIMLG) form a helical membrane-spanning segment. An N-linked (GlcNAc...) asparagine glycan is attached at Asn-253. 6 helical membrane-spanning segments follow: residues 259-279 (IVAV…AGKI), 298-318 (TVVC…YFLI), 329-349 (GVLQ…TLPI), 371-391 (VGAT…AIFI), 413-433 (AASI…VIVL), and 456-476 (FRTM…AHIC).

It belongs to the dicarboxylate/amino acid:cation symporter (DAACS) (TC 2.A.23) family. SLC1A7 subfamily. Interacts with the PDZ domains of DLG4. In terms of tissue distribution, expressed in retina, located in both cone and rod photoreceptor terminals and in axon terminals of rod bipolar cells.

The protein resides in the photoreceptor inner segment membrane. It is found in the synaptic cell membrane. It carries out the reaction K(+)(in) + L-glutamate(out) + 3 Na(+)(out) + H(+)(out) = K(+)(out) + L-glutamate(in) + 3 Na(+)(in) + H(+)(in). It catalyses the reaction K(+)(in) + L-aspartate(out) + 3 Na(+)(out) + H(+)(out) = K(+)(out) + L-aspartate(in) + 3 Na(+)(in) + H(+)(in). The enzyme catalyses D-aspartate(out) + K(+)(in) + 3 Na(+)(out) + H(+)(out) = D-aspartate(in) + K(+)(out) + 3 Na(+)(in) + H(+)(in). In terms of biological role, sodium-dependent, high-affinity amino acid transporter that mediates the uptake of L-glutamate and also L-aspartate and D-aspartate. Functions as a symporter that transports one amino acid molecule together with two or three Na(+) ions and one proton, in parallel with the counter-transport of one K(+) ion. Acts primarily as an inhibitory glutamate-gated chloride channel being a major inhibitory presynaptic receptor at mammalian rod bipolar cell axon terminals. Glutamate binding gates a large Cl(-) conductance that mediates inhibition, affecting visual processing in the retina. This is Excitatory amino acid transporter 5 from Mus musculus (Mouse).